The primary structure comprises 379 residues: UDP-N-acetylglucosamine--N-acetylmuramyl-(pentapeptide) pyrophosphoryl-undecaprenol N-acetylglucosamine transferase (379 aa).

Residues Thr-10–Gly-12, Asn-124, Arg-161, Ser-195, and Gln-291 contribute to the UDP-N-acetyl-alpha-D-glucosamine site.

The protein belongs to the glycosyltransferase 28 family. MurG subfamily.

It is found in the cell membrane. It carries out the reaction di-trans,octa-cis-undecaprenyl diphospho-N-acetyl-alpha-D-muramoyl-L-alanyl-D-glutamyl-meso-2,6-diaminopimeloyl-D-alanyl-D-alanine + UDP-N-acetyl-alpha-D-glucosamine = di-trans,octa-cis-undecaprenyl diphospho-[N-acetyl-alpha-D-glucosaminyl-(1-&gt;4)]-N-acetyl-alpha-D-muramoyl-L-alanyl-D-glutamyl-meso-2,6-diaminopimeloyl-D-alanyl-D-alanine + UDP + H(+). It participates in cell wall biogenesis; peptidoglycan biosynthesis. Its function is as follows. Cell wall formation. Catalyzes the transfer of a GlcNAc subunit on undecaprenyl-pyrophosphoryl-MurNAc-pentapeptide (lipid intermediate I) to form undecaprenyl-pyrophosphoryl-MurNAc-(pentapeptide)GlcNAc (lipid intermediate II). The polypeptide is UDP-N-acetylglucosamine--N-acetylmuramyl-(pentapeptide) pyrophosphoryl-undecaprenol N-acetylglucosamine transferase (Thermobifida fusca (strain YX)).